A 350-amino-acid chain; its full sequence is Trans-enoyl reductase iliB (350 aa).

50-53 (VDGK) is an NADP(+) binding site. 145-152 (AAIATVGL) contacts substrate. NADP(+) contacts are provided by residues 177–180 (SAAS), Tyr195, and 242–243 (LD). A substrate-binding site is contributed by 262–266 (TPTQF). Residue 331–332 (IK) coordinates NADP(+).

The protein belongs to the zinc-containing alcohol dehydrogenase family. As to quaternary structure, monomer.

It carries out the reaction N-[(4E,6E,10S,12Z,14E)-6,10-dimethyl-3-oxohexadeca-4,6,12,14-tetraenoyl]-L-tyrosyl-[ACP] = (3E,5S)-3-[(2E,4E,8S,10E,12Z)-1-hydroxy-4,8-dimethyltetradeca-2,4,10,12-tetraen-1-ylidene]-5-[(4-hydroxyphenyl)methyl]pyrrolidine-2,4-dione + holo-[ACP] + H(+). The protein operates within mycotoxin biosynthesis. In terms of biological role, trans-enoyl reductase; part of the gene cluster that mediates the biosynthesis of ilicicolin H, a 4-hydroxy-2-pyridonealkaloid that has potent and broad antifungal activities by inhibiting the mitochondrial respiration chain. IliB collaborates with the hybrid PKS-NRPS synthetase iliA to assemble the backbone of ilicicolin H. The PKS portion of iliA and trans-acting enoyl reductase iliB work together to construct an octaketide, and two methyl groups are introduced by the MT domain of iliA during the chain assembly. The nascent chain is then condensed with tyrosine, catalyzed by the iliA C domain, and the resulting PKS-NRPS hybrid is offloaded by the iliA RED domain to form an advanced tetramic acid intermediate. The biosynthesis of ilicicolin H starts with formation of the tetramic acid by the hybrid PKS-NRPS synthetase iliA with the partnering trans-enoyl reductase iliB since iliA lacks a designated enoylreductase (ER) domain. The cytochrome P450 monooxygenase iliC then catalyzes the ring expansion of the tetramate to the acyclic 2-pyridone. The pericyclase iliD further converts the acyclic 2-pyridone into 8-epi-ilicicolin H. 8-epi-ilicicolin H might then spontaneously convert to ilicicolin H since ilicicolin H is produced in the absence of the epimerase iliE, in contrast to what was observed for the Talaromyces variabilis ilicolin H biosynthetic pathway. This Hypocrea jecorina (strain QM6a) (Trichoderma reesei) protein is Trans-enoyl reductase iliB.